Here is a 304-residue protein sequence, read N- to C-terminus: Glutaminase (304 aa).

Residues serine 63, asparagine 113, glutamate 157, asparagine 164, tyrosine 188, tyrosine 240, and valine 258 each contribute to the substrate site.

This sequence belongs to the glutaminase family. In terms of assembly, homotetramer.

The enzyme catalyses L-glutamine + H2O = L-glutamate + NH4(+). The polypeptide is Glutaminase (Chromobacterium violaceum (strain ATCC 12472 / DSM 30191 / JCM 1249 / CCUG 213 / NBRC 12614 / NCIMB 9131 / NCTC 9757 / MK)).